The primary structure comprises 459 residues: Plasma alpha-L-fucosidase (459 aa).

An N-terminal signal peptide occupies residues 1–23 (MRLGLLMFLPLLLLATRYRAVTA). Asn-163 and Asn-231 each carry an N-linked (GlcNAc...) asparagine glycan. Phosphoserine is present on Ser-293. A glycan (N-linked (GlcNAc...) asparagine) is linked at Asn-369.

The protein belongs to the glycosyl hydrolase 29 family. As to quaternary structure, homotetramer.

It localises to the secreted. It catalyses the reaction an alpha-L-fucoside + H2O = L-fucose + an alcohol. Functionally, alpha-L-fucosidase is responsible for hydrolyzing the alpha-1,6-linked fucose joined to the reducing-end N-acetylglucosamine of the carbohydrate moieties of glycoproteins. This Rattus norvegicus (Rat) protein is Plasma alpha-L-fucosidase (Fuca2).